A 172-amino-acid chain; its full sequence is Photosystem I assembly protein Ycf3 (172 aa).

TPR repeat units lie at residues 35 to 68, 72 to 105, and 120 to 153; these read AFSY…EVDA, SYIL…NPSL, and GEQA…APTN.

The protein belongs to the Ycf3 family.

The protein resides in the plastid. It is found in the chloroplast thylakoid membrane. Its function is as follows. Essential for the assembly of the photosystem I (PSI) complex. May act as a chaperone-like factor to guide the assembly of the PSI subunits. The protein is Photosystem I assembly protein Ycf3 of Chlamydomonas reinhardtii (Chlamydomonas smithii).